The chain runs to 611 residues: Glutamine--fructose-6-phosphate aminotransferase [isomerizing] (611 aa).

Cys-2 serves as the catalytic Nucleophile; for GATase activity. The Glutamine amidotransferase type-2 domain maps to 2-219; sequence CGIVGAVAER…EGDIAEIRRD (218 aa). SIS domains follow at residues 287–427 and 460–601; these read AADL…VRGT and IAEL…VDQP. The active-site For Fru-6P isomerization activity is the Lys-606.

Homodimer.

It is found in the cytoplasm. It catalyses the reaction D-fructose 6-phosphate + L-glutamine = D-glucosamine 6-phosphate + L-glutamate. In terms of biological role, catalyzes the first step in hexosamine metabolism, converting fructose-6P into glucosamine-6P using glutamine as a nitrogen source. This chain is Glutamine--fructose-6-phosphate aminotransferase [isomerizing], found in Pseudomonas putida (strain ATCC 47054 / DSM 6125 / CFBP 8728 / NCIMB 11950 / KT2440).